A 101-amino-acid polypeptide reads, in one-letter code: Large ribosomal subunit protein uL24 (101 aa).

The protein belongs to the universal ribosomal protein uL24 family. In terms of assembly, part of the 50S ribosomal subunit.

One of two assembly initiator proteins, it binds directly to the 5'-end of the 23S rRNA, where it nucleates assembly of the 50S subunit. Functionally, one of the proteins that surrounds the polypeptide exit tunnel on the outside of the subunit. In Ruegeria sp. (strain TM1040) (Silicibacter sp.), this protein is Large ribosomal subunit protein uL24.